The sequence spans 640 residues: Threonine--tRNA ligase (640 aa).

A TGS domain is found at 1 to 61; it reads MPIITLPDGS…TNDAEIQIIT (61 aa). The tract at residues 242–533 is catalytic; sequence DHRKLGKKLS…LIENYSGNLP (292 aa). Zn(2+)-binding residues include C333, H384, and H510.

This sequence belongs to the class-II aminoacyl-tRNA synthetase family. Homodimer. It depends on Zn(2+) as a cofactor.

Its subcellular location is the cytoplasm. It catalyses the reaction tRNA(Thr) + L-threonine + ATP = L-threonyl-tRNA(Thr) + AMP + diphosphate + H(+). In terms of biological role, catalyzes the attachment of threonine to tRNA(Thr) in a two-step reaction: L-threonine is first activated by ATP to form Thr-AMP and then transferred to the acceptor end of tRNA(Thr). Also edits incorrectly charged L-seryl-tRNA(Thr). The polypeptide is Threonine--tRNA ligase (Prochlorococcus marinus (strain NATL1A)).